A 202-amino-acid polypeptide reads, in one-letter code: Small ribosomal subunit protein uS4 (202 aa).

A disordered region spans residues 16–42; sequence GELPGLSRKNPRRAYPPGQHGQARKKR. The S4 RNA-binding domain maps to 90–151; it reads MRLDNTVFRL…QERSRRLVEA (62 aa).

Belongs to the universal ribosomal protein uS4 family. Part of the 30S ribosomal subunit. Contacts protein S5. The interaction surface between S4 and S5 is involved in control of translational fidelity.

Functionally, one of the primary rRNA binding proteins, it binds directly to 16S rRNA where it nucleates assembly of the body of the 30S subunit. Its function is as follows. With S5 and S12 plays an important role in translational accuracy. This chain is Small ribosomal subunit protein uS4, found in Rippkaea orientalis (strain PCC 8801 / RF-1) (Cyanothece sp. (strain PCC 8801)).